The primary structure comprises 181 residues: UPF0316 protein Bcer98_2136 (181 aa).

Transmembrane regions (helical) follow at residues 6–26, 32–52, and 58–78; these read LIFVLQIIYVPVLTIRTILLV, SAAGVGLLEGAIYIISLGIVF, and WMNIVAYIIGFSAGLLLGGYI.

This sequence belongs to the UPF0316 family.

It localises to the cell membrane. This Bacillus cytotoxicus (strain DSM 22905 / CIP 110041 / 391-98 / NVH 391-98) protein is UPF0316 protein Bcer98_2136.